An 890-amino-acid chain; its full sequence is DNA mismatch repair protein MutS (890 aa).

634–641 provides a ligand contact to ATP; it reads GPNMGGKS.

It belongs to the DNA mismatch repair MutS family.

Functionally, this protein is involved in the repair of mismatches in DNA. It is possible that it carries out the mismatch recognition step. This protein has a weak ATPase activity. The chain is DNA mismatch repair protein MutS from Burkholderia pseudomallei (strain 1710b).